The sequence spans 202 residues: Protein lin-28 homolog A (202 aa).

The segment at 1 to 31 is disordered; the sequence is MGSVSNQQFAGAKPGEEPSGDSPKAENESQP. In terms of domain architecture, CSD spans 33 to 106; the sequence is HGSGICKWFN…GLESIRVTGP (74 aa). Positions 107–130 are flexible linker; sequence GGVFCIGSERRPKSKSLQKRRSKG. 2 CCHC-type zinc fingers span residues 131–148 and 153–170; these read DRCY…ECKL and KKCH…NCPA. The Zn(2+) site is built by C133, C136, H141, C146, C155, C158, H163, and C168. Residues 169–202 form a disordered region; sequence PAKAQQSPSSQGKPAYFREKEDMHSSALLPETRE.

This sequence belongs to the lin-28 family. In terms of assembly, monomer.

Its subcellular location is the cytoplasm. It is found in the rough endoplasmic reticulum. It localises to the P-body. The protein localises to the stress granule. The protein resides in the nucleus. Its subcellular location is the nucleolus. In terms of biological role, RNA-binding protein that inhibits processing of pre-let-7 miRNAs and regulates translation of mRNAs that control developmental timing, pluripotency and metabolism. Seems to recognize a common structural G-quartet (G4) feature in its miRNA and mRNA targets. 'Translational enhancer' that drives specific mRNAs to polysomes and increases the efficiency of protein synthesis. Its association with the translational machinery and target mRNAs results in an increased number of initiation events per molecule of mRNA and, indirectly, in mRNA stabilization. Suppressor of microRNA (miRNA) biogenesis, including that of let-7. Binds specific target miRNA precursors (pre-miRNAs), recognizing an 5'-GGAG-3' motif found in their terminal loop, and recruits uridylyltransferase. This results in the terminal uridylation of target pre-miRNAs. Uridylated pre-miRNAs fail to be processed by Dicer and undergo degradation. Localized to the periendoplasmic reticulum area, binds to a large number of spliced mRNAs and inhibits the translation of mRNAs destined for the ER, reducing the synthesis of transmembrane proteins, ER or Golgi lumen proteins, and secretory proteins. Binds to and enhances the translation of mRNAs for several metabolic enzymes, increasing glycolysis and oxidative phosphorylation. Which, with the let-7 repression may enhance tissue repair in adult tissue. This is Protein lin-28 homolog A (LIN28A) from Gallus gallus (Chicken).